Reading from the N-terminus, the 417-residue chain is MFSRDLTIAKYDADLFAAMEQEALRQEEHIELIASENYTSPAVMEAQGSALTNKYAEGYPGKRYYGGCEYVDVIEQLAIDRAKELFGADYANVQPHAGSQANSAVYLALLQGGDTILGMSLAHGGHLTHGASVSSSGKLYNAVQYGIDANGMIDYDEVERLAVEHKPKMIVAGFSAYSQILDFPRFRAIADKVGAYLFVDMAHVAGLVAAGVYPNPVPFADVVTTTTHKTLRGPRGGLILARANAEIEKKLNSAVFPGSQGGPLEHVIAAKAVCFKEALQPEFKTYQQQVVKNAKAMAGVFIERGFDVVSGGTENHLFLLSLIKQDISGKDADAALGRAFITVNKNSVPNDPRSPFVTSGLRFGTPAVTTRGFKEAECKELAGWICDILADLNNEAVIDAVREKVKAICAKLPVYGA.

Residues L121 and 125–127 (GHL) contribute to the (6S)-5,6,7,8-tetrahydrofolate site. N6-(pyridoxal phosphate)lysine is present on K229. 354 to 356 (SPF) lines the (6S)-5,6,7,8-tetrahydrofolate pocket.

The protein belongs to the SHMT family. In terms of assembly, homodimer. Pyridoxal 5'-phosphate is required as a cofactor.

Its subcellular location is the cytoplasm. The enzyme catalyses (6R)-5,10-methylene-5,6,7,8-tetrahydrofolate + glycine + H2O = (6S)-5,6,7,8-tetrahydrofolate + L-serine. The protein operates within one-carbon metabolism; tetrahydrofolate interconversion. Its pathway is amino-acid biosynthesis; glycine biosynthesis; glycine from L-serine: step 1/1. Functionally, catalyzes the reversible interconversion of serine and glycine with tetrahydrofolate (THF) serving as the one-carbon carrier. This reaction serves as the major source of one-carbon groups required for the biosynthesis of purines, thymidylate, methionine, and other important biomolecules. Also exhibits THF-independent aldolase activity toward beta-hydroxyamino acids, producing glycine and aldehydes, via a retro-aldol mechanism. In Pseudomonas savastanoi pv. phaseolicola (strain 1448A / Race 6) (Pseudomonas syringae pv. phaseolicola (strain 1448A / Race 6)), this protein is Serine hydroxymethyltransferase 1.